A 131-amino-acid chain; its full sequence is Small ribosomal subunit protein bS6 (131 aa).

The interval 96–131 is disordered; the sequence is VTEASPMAKAKDERDSRRGPAGDRSYDEANAEEIAE. The segment covering 104-122 has biased composition (basic and acidic residues); that stretch reads KAKDERDSRRGPAGDRSYD.

Belongs to the bacterial ribosomal protein bS6 family.

In terms of biological role, binds together with bS18 to 16S ribosomal RNA. This Shewanella sp. (strain ANA-3) protein is Small ribosomal subunit protein bS6.